We begin with the raw amino-acid sequence, 509 residues long: BPI fold-containing family C protein (509 aa).

The N-terminal stretch at 1–23 (MRTKQVPVLWACFLLWSLYIASS) is a signal peptide. Asparagine 63, asparagine 79, asparagine 92, asparagine 113, and asparagine 117 each carry an N-linked (GlcNAc...) asparagine glycan. Cysteine 161 and cysteine 202 are oxidised to a cystine. Asparagine 215, asparagine 227, asparagine 357, asparagine 374, and asparagine 457 each carry an N-linked (GlcNAc...) asparagine glycan.

It belongs to the BPI/LBP/Plunc superfamily. BPI/LBP family.

It localises to the secreted. In Mus musculus (Mouse), this protein is BPI fold-containing family C protein (Bpifc).